An 895-amino-acid polypeptide reads, in one-letter code: Receptor-like protein kinase FERONIA (895 aa).

The N-terminal stretch at M1–A27 is a signal peptide. Residues A28–A447 lie on the Extracellular side of the membrane. N-linked (GlcNAc...) asparagine glycans are attached at residues N46, N124, N142, N171, N219, N269, N305, N330, N345, and N410. The helical transmembrane segment at I448–F468 threads the bilayer. Over G469–R895 the chain is Cytoplasmic. The 275-residue stretch at F536–A810 folds into the Protein kinase domain. ATP contacts are provided by residues L542–V550 and K565. Residue D661 is the Proton acceptor of the active site. Residues N844 to R895 are disordered. Phosphoserine is present on residues S858, S866, S871, and S874. The span at A884 to R895 shows a compositional bias: polar residues.

This sequence belongs to the protein kinase superfamily. Ser/Thr protein kinase family. As to quaternary structure, interacts with ROPGEF1. Interacts with RALF1; triggering phosphorylation status and subsequent activation. Interacts with LRE and LLG1. Interacts, via its extracellular domain, with FERONIA at the synergid cell surface. Autophosphorylated. Post-translationally, phosphorylated at Ser-858, Ser-871 and Ser-874 upon activation by RALF1. As to expression, expressed in leaves, buds, flowers, siliques, young ovules primordia, and young anthers with immature pollen, but not detected in mature pollen. Highest expression in the synergid cells of the female gametophyte.

Its subcellular location is the cell membrane. The enzyme catalyses L-seryl-[protein] + ATP = O-phospho-L-seryl-[protein] + ADP + H(+). The catalysed reaction is L-threonyl-[protein] + ATP = O-phospho-L-threonyl-[protein] + ADP + H(+). Its function is as follows. Receptor-like protein kinase that mediates the female control of male gamete delivery during fertilization, including growth cessation of compatible pollen tubes ensuring a reproductive isolation barriers, by regulating MLO7 subcellular polarization upon pollen tube perception in the female gametophyte synergids. Required for cell elongation during vegetative growth, mostly in a brassinosteroids- (BR-) independent manner. Acts as an upstream regulator for the Rac/Rop-signaling pathway that controls ROS-mediated root hair development. Seems to regulate a cross-talk between brassinosteroids and ethylene signaling pathways during hypocotyl elongation. Negative regulator of brassinosteroid response in light-grown hypocotyls, but required for brassinosteroid response in etiolated seedlings. Mediates sensitivity to powdery mildew (e.g. Golovinomyces orontii). Positive regulator of auxin-promoted growth that represses the abscisic acid (ABA) signaling via the activation of ABI2 phosphatase. Required for RALF1-mediated extracellular alkalinization in a signaling pathway preventing cell expansion. The polypeptide is Receptor-like protein kinase FERONIA (Arabidopsis thaliana (Mouse-ear cress)).